Consider the following 476-residue polypeptide: Sulfate adenylyltransferase subunit 1 (476 aa).

Positions 24-243 constitute a tr-type G domain; sequence KSLLRFLTCG…VDVEKEKEAG (220 aa). The interval 33-40 is G1; that stretch reads GSVDDGKS. GTP is bound at residue 33–40; it reads GSVDDGKS. A G2 region spans residues 91–95; it reads GITID. Residues 112 to 115 form a G3 region; the sequence is DTPG. Residues 112 to 116 and 167 to 170 each bind GTP; these read DTPGH and NKMD. Positions 167–170 are G4; sequence NKMD. The interval 205 to 207 is G5; the sequence is SAL.

This sequence belongs to the TRAFAC class translation factor GTPase superfamily. Classic translation factor GTPase family. CysN/NodQ subfamily. Heterodimer composed of CysD, the smaller subunit, and CysN.

It carries out the reaction sulfate + ATP + H(+) = adenosine 5'-phosphosulfate + diphosphate. It participates in sulfur metabolism; hydrogen sulfide biosynthesis; sulfite from sulfate: step 1/3. In terms of biological role, with CysD forms the ATP sulfurylase (ATPS) that catalyzes the adenylation of sulfate producing adenosine 5'-phosphosulfate (APS) and diphosphate, the first enzymatic step in sulfur assimilation pathway. APS synthesis involves the formation of a high-energy phosphoric-sulfuric acid anhydride bond driven by GTP hydrolysis by CysN coupled to ATP hydrolysis by CysD. The chain is Sulfate adenylyltransferase subunit 1 from Vibrio vulnificus (strain YJ016).